We begin with the raw amino-acid sequence, 210 residues long: Na(+)-translocating NADH-quinone reductase subunit D (210 aa).

6 helical membrane passes run 14–34 (PIIN…ALAV), 42–62 (LVMT…ISLI), 72–92 (IIVQ…VLQA), 96–116 (AISK…IVMG), 131–151 (FMDG…VGVV), and 178–198 (NGLL…IWLI).

It belongs to the NqrDE/RnfAE family. In terms of assembly, composed of six subunits; NqrA, NqrB, NqrC, NqrD, NqrE and NqrF.

It is found in the cell inner membrane. The enzyme catalyses a ubiquinone + n Na(+)(in) + NADH + H(+) = a ubiquinol + n Na(+)(out) + NAD(+). Functionally, NQR complex catalyzes the reduction of ubiquinone-1 to ubiquinol by two successive reactions, coupled with the transport of Na(+) ions from the cytoplasm to the periplasm. NqrA to NqrE are probably involved in the second step, the conversion of ubisemiquinone to ubiquinol. The protein is Na(+)-translocating NADH-quinone reductase subunit D of Shewanella frigidimarina (strain NCIMB 400).